Reading from the N-terminus, the 431-residue chain is Xaa-Arg dipeptidase (431 aa).

Belongs to the peptidase M20A family.

It catalyses the reaction beta-alanyl-L-lysine + H2O = beta-alanine + L-lysine. The enzyme catalyses beta-alanyl-L-arginine + H2O = beta-alanine + L-arginine. The catalysed reaction is beta-alanyl-L-ornithine + H2O = beta-alanine + L-ornithine. It carries out the reaction N(2)-(4-aminobutanoyl)-L-lysine + H2O = 4-aminobutanoate + L-lysine. It catalyses the reaction N(2)-(4-aminobutanoyl)-L-arginine + H2O = 4-aminobutanoate + L-arginine. The enzyme catalyses N(2)-(4-aminobutanoyl)-L-ornithine + H2O = 4-aminobutanoate + L-ornithine. Catalyzes the peptide bond hydrolysis in dipeptides having basic amino acids lysine, ornithine or arginine at C-terminus. Postulated to function in a metabolite repair mechanism by eliminating alternate dipeptide by-products formed during carnosine synthesis. The sequence is that of Xaa-Arg dipeptidase from Mus musculus (Mouse).